The sequence spans 245 residues: Vacuolar iron transporter (245 aa).

Topologically, residues 1–28 are cytoplasmic; it reads MGEVGESEKYLLNRHKEHHFTAGETVRD. A helical transmembrane segment spans residues 29 to 49; it reads IIIGFSDGLTVPFALAAGLSG. Topologically, residues 50–55 are vacuolar; the sequence is ANASSS. Residues 56–76 form a helical membrane-spanning segment; it reads IILTAGIAEVAAGAISMGLGG. Residues 77-162 are Cytoplasmic-facing; sequence YLAAKSEADH…PRRALQSALT (86 aa). Fe cation-binding residues include Glu94, Glu97, Glu105, Glu108, Met141, and Glu145. Residues 163 to 183 form a helical membrane-spanning segment; that stretch reads IAISYVLSGLIPLLPYMFIPI. The Vacuolar segment spans residues 184 to 186; sequence AQK. Residues 187-207 form a helical membrane-spanning segment; sequence AVVSSVIVTIFALLIFGFAKG. Residues 208-214 lie on the Cytoplasmic side of the membrane; it reads YFTGNKP. A helical membrane pass occupies residues 215–235; the sequence is VWSALQTALIGAIASAAAFGM. The Vacuolar portion of the chain corresponds to 236-245; that stretch reads AKGCASSVFE.

It belongs to the CCC1 family. Expressed in petal tissues, but not in other parts of the plant, such as leaves, roots, sepals and stems.

It localises to the vacuole membrane. It carries out the reaction Fe(2+)(in) = Fe(2+)(out). Vacuolar iron transporter involved in the transfer of iron ions from the cytosol to the vacuole for intracellular iron storage. Plays an essential role in the development of blue coloration in cornflower petals. The protein is Vacuolar iron transporter of Centaurea cyanus (Garden cornflower).